A 541-amino-acid chain; its full sequence is Chlorophyllide a oxygenase, chloroplastic (541 aa).

Residues leucine 114–serine 151 adopt a coiled-coil conformation. Positions alanine 178–arginine 192 are enriched in polar residues. The disordered stretch occupies residues alanine 178–proline 208. The region spanning tryptophan 220 to isoleucine 320 is the Rieske domain. 4 residues coordinate [2Fe-2S] cluster: cysteine 261, histidine 263, cysteine 280, and histidine 283. Aspartate 359, aspartate 363, histidine 366, and histidine 371 together coordinate Fe cation.

Expressed in leaves and germinating seedlings, but not in sheaths and roots.

The protein localises to the plastid. It localises to the chloroplast membrane. It is found in the chloroplast thylakoid membrane. It carries out the reaction chlorophyllide a + 2 NADPH + 2 O2 + 2 H(+) = chlorophyllide b + 2 NADP(+) + 3 H2O. Functionally, catalyzes a two-step oxygenase reaction involved in the synthesis of chlorophyll b. Acts specifically on the non-esterified chlorophyllide a and not on chlorophyll a. The polypeptide is Chlorophyllide a oxygenase, chloroplastic (CAO) (Oryza sativa subsp. japonica (Rice)).